The sequence spans 101 residues: Urease subunit beta (101 aa).

This sequence belongs to the urease beta subunit family. In terms of assembly, heterotrimer of UreA (gamma), UreB (beta) and UreC (alpha) subunits. Three heterotrimers associate to form the active enzyme.

It localises to the cytoplasm. It carries out the reaction urea + 2 H2O + H(+) = hydrogencarbonate + 2 NH4(+). It functions in the pathway nitrogen metabolism; urea degradation; CO(2) and NH(3) from urea (urease route): step 1/1. The protein is Urease subunit beta of Polaromonas naphthalenivorans (strain CJ2).